Consider the following 199-residue polypeptide: Probable nicotinate-nucleotide adenylyltransferase (199 aa).

The protein belongs to the NadD family.

The enzyme catalyses nicotinate beta-D-ribonucleotide + ATP + H(+) = deamido-NAD(+) + diphosphate. It functions in the pathway cofactor biosynthesis; NAD(+) biosynthesis; deamido-NAD(+) from nicotinate D-ribonucleotide: step 1/1. Its function is as follows. Catalyzes the reversible adenylation of nicotinate mononucleotide (NaMN) to nicotinic acid adenine dinucleotide (NaAD). In Roseobacter denitrificans (strain ATCC 33942 / OCh 114) (Erythrobacter sp. (strain OCh 114)), this protein is Probable nicotinate-nucleotide adenylyltransferase.